We begin with the raw amino-acid sequence, 145 residues long: D-aminoacyl-tRNA deacylase (145 aa).

A Gly-cisPro motif, important for rejection of L-amino acids motif is present at residues 137–138 (GP).

The protein belongs to the DTD family. In terms of assembly, homodimer.

Its subcellular location is the cytoplasm. The catalysed reaction is glycyl-tRNA(Ala) + H2O = tRNA(Ala) + glycine + H(+). It catalyses the reaction a D-aminoacyl-tRNA + H2O = a tRNA + a D-alpha-amino acid + H(+). Functionally, an aminoacyl-tRNA editing enzyme that deacylates mischarged D-aminoacyl-tRNAs. Also deacylates mischarged glycyl-tRNA(Ala), protecting cells against glycine mischarging by AlaRS. Acts via tRNA-based rather than protein-based catalysis; rejects L-amino acids rather than detecting D-amino acids in the active site. By recycling D-aminoacyl-tRNA to D-amino acids and free tRNA molecules, this enzyme counteracts the toxicity associated with the formation of D-aminoacyl-tRNA entities in vivo and helps enforce protein L-homochirality. The polypeptide is D-aminoacyl-tRNA deacylase (Exiguobacterium sibiricum (strain DSM 17290 / CCUG 55495 / CIP 109462 / JCM 13490 / 255-15)).